The primary structure comprises 153 residues: Movement protein (153 aa).

Disordered stretches follow at residues 1-24 and 107-153; these read MAQEGGAVEQFGQWLWSNPIEQDP and ALSL…RNQR. Composition is skewed to polar residues over residues 109-122 and 140-153; these read SLLSSTPRASNQPW and GQRQLMGRNSRNQR.

This sequence belongs to the luteoviruses movement protein family.

The protein resides in the host nucleus envelope. Functionally, transports viral genome to neighboring plant cells directly through plasmosdesmata, without any budding. The movement protein allows efficient cell to cell propagation, by bypassing the host cell wall barrier. Acts as a suppressor of RNA-mediated gene silencing, also known as post-transcriptional gene silencing (PTGS), a mechanism of plant viral defense that limits the accumulation of viral RNAs. This is Movement protein from Avena byzantina (Oat).